Here is a 209-residue protein sequence, read N- to C-terminus: Uracil phosphoribosyltransferase (209 aa).

Residues R79, R104, and 131-139 (DPMLATGNS) each bind 5-phospho-alpha-D-ribose 1-diphosphate. Uracil contacts are provided by residues I194 and 199 to 201 (GDA). D200 lines the 5-phospho-alpha-D-ribose 1-diphosphate pocket.

Belongs to the UPRTase family. It depends on Mg(2+) as a cofactor.

The catalysed reaction is UMP + diphosphate = 5-phospho-alpha-D-ribose 1-diphosphate + uracil. It functions in the pathway pyrimidine metabolism; UMP biosynthesis via salvage pathway; UMP from uracil: step 1/1. Allosterically activated by GTP. In terms of biological role, catalyzes the conversion of uracil and 5-phospho-alpha-D-ribose 1-diphosphate (PRPP) to UMP and diphosphate. The chain is Uracil phosphoribosyltransferase from Acidovorax ebreus (strain TPSY) (Diaphorobacter sp. (strain TPSY)).